We begin with the raw amino-acid sequence, 1026 residues long: MRFFALFIYRPVATILIAAAITLCGILGFRLLPVAPLPQVDFPVIMVSASLPGASPETMASSVATPLERSLGRIAGVNEMTSSSSLGSTRIILEFNFDRDINGAARDVQAAINAAQSLLPGGMPSRPTYRKANPSDAPIMILTLTSESWSQGKLYDFASTQLAQTIAQIDGVGDVDVGGSSLPAVRVGLNPQALFNQGVSLDEVREAIDSANVRRPQGAIEDSVHRWQIQTNDELKTAAEYQPLIIHYNNGAAVRLGDVASVTDSVQDVRNAGMTNAKPAILLMIRKLPEANIIQTVDGIRAKLPELRAMIPAAIDLQIAQDRSPTIRASLQEVEETLAISVALVILVVFLFLRSGRATLIPAVAVPVSLIGTFAAMYLCGFSLNNLSLMALTIATGFVVDDAIVVLENIARHLEARMKPLQAALQGTREVGFTVISMSLSLVAVFLPLLLMGGLPGRLLREFAVTLSVAIGISLVVSLTLTPMMCGWMLKSSKPRTQPRKRGVGRLLVALQQGYGTSLKWVLNHTRLVGVVFLGTVALNIWLYIAIPKTFFPEQDTGVLMGGIQADQSISFQAMRGKLQDFMKIIRDDPAVNNVTGFTGGSRVNSGMMFITLKPRGERKETAQQVIDRLRVKLAKEPGAKLFLMAVQDIRVGGRQANASYQYTLLSDSLPALREWEPKIRKALSALPQLADVNSDQQDNGAEMNLIYDRDTMSRLGIDVQAANSLLNNAFGQRQISTIYQPMNQYKVVMEVDPRYSQDISALEKMFVINRDGKAIPLSYFAQWRPANAPLSVNHQGLSAASTIAFNLPTGTSLSQATEAIDRTMTQLGVPSTVRGSFSGTAQVFQQTMNSQLILIVAAIATVYIVLGILYESYVHPLTILSTLPSAGVGALLALELFNAPFSLIALIGIMLLIGIVKKNAIMMVDFALEAQRSGGLTPEQAIFQACLLRFRPIMMTTLAALFGALPLVLSGGDGSELRQPLGITIVGGLVMSQLLTLYTTPVVYLFFDRLRLRFSRKNSKPVVEI.

The Cytoplasmic segment spans residues 1-6 (MRFFAL). A helical transmembrane segment spans residues 7–29 (FIYRPVATILIAAAITLCGILGF). The Periplasmic portion of the chain corresponds to 30–335 (RLLPVAPLPQ…TIRASLQEVE (306 aa)). Residues 336 to 353 (ETLAISVALVILVVFLFL) traverse the membrane as a helical segment. Residues 354–359 (RSGRAT) are Cytoplasmic-facing. The helical transmembrane segment at 360–379 (LIPAVAVPVSLIGTFAAMYL) threads the bilayer. Topologically, residues 380-388 (CGFSLNNLS) are periplasmic. The chain crosses the membrane as a helical span at residues 389–411 (LMALTIATGFVVDDAIVVLENIA). The Cytoplasmic segment spans residues 412–430 (RHLEARMKPLQAALQGTRE). A helical transmembrane segment spans residues 431–453 (VGFTVISMSLSLVAVFLPLLLMG). Residues 454–467 (GLPGRLLREFAVTL) lie on the Periplasmic side of the membrane. Residues 468–490 (SVAIGISLVVSLTLTPMMCGWML) form a helical membrane-spanning segment. Residues 491 to 852 (KSSKPRTQPR…QVFQQTMNSQ (362 aa)) are Cytoplasmic-facing. The helical transmembrane segment at 853 to 875 (LILIVAAIATVYIVLGILYESYV) threads the bilayer. At 876 to 894 (HPLTILSTLPSAGVGALLA) the chain is on the periplasmic side. Residues 895–917 (LELFNAPFSLIALIGIMLLIGIV) form a helical membrane-spanning segment. The Cytoplasmic segment spans residues 918–947 (KKNAIMMVDFALEAQRSGGLTPEQAIFQAC). A helical transmembrane segment spans residues 948–970 (LLRFRPIMMTTLAALFGALPLVL). Topologically, residues 971-984 (SGGDGSELRQPLGI) are periplasmic. The chain crosses the membrane as a helical span at residues 985–1007 (TIVGGLVMSQLLTLYTTPVVYLF). The Cytoplasmic segment spans residues 1008–1026 (FDRLRLRFSRKNSKPVVEI).

Belongs to the resistance-nodulation-cell division (RND) (TC 2.A.6) family. MdtC subfamily. In terms of assembly, part of a tripartite efflux system composed of MdtA, MdtB and MdtC. MdtC forms a heteromultimer with MdtB.

The protein localises to the cell inner membrane. This chain is Multidrug resistance protein MdtC, found in Salmonella typhi.